We begin with the raw amino-acid sequence, 780 residues long: Protein SAV (780 aa).

ATP contacts are provided by residues 253–260 (GPPGTGKT) and 528–535 (GPPGTGKT).

It belongs to the AAA ATPase family. CDC48 subfamily.

Its function is as follows. Not yet known, shows ATPase activity. This is Protein SAV (sav) from Sulfolobus acidocaldarius (strain ATCC 33909 / DSM 639 / JCM 8929 / NBRC 15157 / NCIMB 11770).